Here is a 900-residue protein sequence, read N- to C-terminus: Serine-rich coiled-coil domain-containing protein 1 (900 aa).

Disordered regions lie at residues 1–100 (MGDS…HSNM) and 156–178 (KSEG…QSTR). Low complexity predominate over residues 29–56 (LPSSPSSSNTVGVHSSSPSSTNSSSGST). A compositionally biased stretch (polar residues) spans 81–100 (EPTNQNLSISNGAQPGHSNM). A coiled-coil region spans residues 673-707 (MKDECSMLKLQLKEKDELISQLQEELGKVRHLQKA).

Belongs to the CCSER family.

The protein is Serine-rich coiled-coil domain-containing protein 1 (CCSER1) of Homo sapiens (Human).